A 315-amino-acid chain; its full sequence is ATP synthase gamma chain (315 aa).

This sequence belongs to the ATPase gamma chain family. F-type ATPases have 2 components, CF(1) - the catalytic core - and CF(0) - the membrane proton channel. CF(1) has five subunits: alpha(3), beta(3), gamma(1), delta(1), epsilon(1). CF(0) has three main subunits: a, b and c.

Its subcellular location is the cellular thylakoid membrane. In terms of biological role, produces ATP from ADP in the presence of a proton gradient across the membrane. The gamma chain is believed to be important in regulating ATPase activity and the flow of protons through the CF(0) complex. In Nostoc punctiforme (strain ATCC 29133 / PCC 73102), this protein is ATP synthase gamma chain.